The chain runs to 155 residues: uncharacterized protein (155 aa).

5 helical membrane passes run 4–24, 46–66, 77–97, 101–121, and 130–150; these read IVGA…AGYL, AIGI…AIVY, FWFT…FQFT, LLAA…LLII, and SYLL…SFTI.

This sequence belongs to the TspO/BZRP family.

Its subcellular location is the cell membrane. This is an uncharacterized protein from Bacillus subtilis (strain 168).